Reading from the N-terminus, the 22-residue chain is Cysteine proteinase (22 aa).

The disordered stretch occupies residues 1 to 22; the sequence is GADDSDWRKKGAVNVIXKDQGQ.

Belongs to the peptidase C1 family.

This is Cysteine proteinase from Trichomonas vaginalis.